A 305-amino-acid chain; its full sequence is Tyrosine recombinase XerC (305 aa).

The region spanning threonine 4–glutamate 95 is the Core-binding (CB) domain. The Tyr recombinase domain maps to leucine 116–threonine 298. Residues arginine 159, lysine 182, histidine 250, arginine 253, and histidine 276 contribute to the active site. Tyrosine 285 functions as the O-(3'-phospho-DNA)-tyrosine intermediate in the catalytic mechanism.

The protein belongs to the 'phage' integrase family. XerC subfamily. In terms of assembly, forms a cyclic heterotetrameric complex composed of two molecules of XerC and two molecules of XerD.

The protein resides in the cytoplasm. Functionally, site-specific tyrosine recombinase, which acts by catalyzing the cutting and rejoining of the recombining DNA molecules. The XerC-XerD complex is essential to convert dimers of the bacterial chromosome into monomers to permit their segregation at cell division. It also contributes to the segregational stability of plasmids. The polypeptide is Tyrosine recombinase XerC (Rickettsia conorii (strain ATCC VR-613 / Malish 7)).